Reading from the N-terminus, the 312-residue chain is Protoheme IX farnesyltransferase (312 aa).

Residues 1–36 lie on the Cytoplasmic side of the membrane; that stretch reads MNKSNTAIDPTNVIEAGPDSSVADVQQKSWKDYLVL. Residues 37–55 traverse the membrane as a helical segment; sequence AKQGIVTSNLITTFAGIYL. The Extracellular portion of the chain corresponds to 56 to 69; that stretch reads AIVYTGTVFTMHLD. The helical transmembrane segment at 70-88 threads the bilayer; it reads TMIFALLGAALVMAGGCTL. At 89 to 110 the chain is on the cytoplasmic side; the sequence is NNYIDRDIDHLMERTKERPTVT. A helical membrane pass occupies residues 111-129; that stretch reads GRFSAKHVLLVGLAQAALG. The Extracellular portion of the chain corresponds to 130–138; the sequence is IIFLALTTP. Residues 139 to 157 traverse the membrane as a helical segment; it reads TAAVIGLIGLFIYVVLYTM. Topologically, residues 158–228 are cytoplasmic; it reads WTKRTTTLNT…YRAAGIPMLP (71 aa). Residues 229–247 traverse the membrane as a helical segment; sequence VVAGFEMTKRQMVVYVAAL. Residues 248–259 lie on the Extracellular side of the membrane; the sequence is LPVSLMLYPFGL. A helical transmembrane segment spans residues 260-275; that stretch reads VYTIVAAVLGVGWLAL. Residues 276-296 are Cytoplasmic-facing; sequence GIAGFKMKDDIKWARLMFVYS. Residues 297 to 307 traverse the membrane as a helical segment; that stretch reads LNYLTILFVLM. The Extracellular segment spans residues 308–312; the sequence is VIVHF.

The protein belongs to the UbiA prenyltransferase family.

It localises to the cell membrane. It carries out the reaction heme b + (2E,6E)-farnesyl diphosphate + H2O = Fe(II)-heme o + diphosphate. The protein operates within porphyrin-containing compound metabolism; heme O biosynthesis; heme O from protoheme: step 1/1. Functionally, converts protoheme IX and farnesyl diphosphate to heme O. This is Protoheme IX farnesyltransferase (ctaB) from Alkalihalophilus pseudofirmus (strain ATCC BAA-2126 / JCM 17055 / OF4) (Bacillus pseudofirmus).